A 293-amino-acid polypeptide reads, in one-letter code: Ribonuclease HIII (293 aa).

Residues 78-293 (LPLIGTDEVG…TEKAKKRLER (216 aa)) form the RNase H type-2 domain. Residues aspartate 84, glutamate 85, and aspartate 187 each coordinate a divalent metal cation.

Belongs to the RNase HII family. RnhC subfamily. Mn(2+) serves as cofactor. Mg(2+) is required as a cofactor.

The protein resides in the cytoplasm. It catalyses the reaction Endonucleolytic cleavage to 5'-phosphomonoester.. Its function is as follows. Endonuclease that specifically degrades the RNA of RNA-DNA hybrids. The polypeptide is Ribonuclease HIII (Streptococcus pneumoniae (strain 70585)).